The following is a 150-amino-acid chain: Large ribosomal subunit protein bL9 (150 aa).

The protein belongs to the bacterial ribosomal protein bL9 family.

Its function is as follows. Binds to the 23S rRNA. In Variovorax paradoxus (strain S110), this protein is Large ribosomal subunit protein bL9.